We begin with the raw amino-acid sequence, 157 residues long: Protein Smg homolog (157 aa).

Belongs to the Smg family.

This Aeromonas salmonicida (strain A449) protein is Protein Smg homolog.